We begin with the raw amino-acid sequence, 330 residues long: Flotillin-like protein FloA (330 aa).

2 consecutive transmembrane segments (helical) span residues 6–26 (LLLF…FTFV) and 28–48 (VMLW…TLVG).

The protein belongs to the flotillin-like FloA family. Homooligomerizes.

It is found in the cell membrane. It localises to the membrane raft. Found in functional membrane microdomains (FMM) that may be equivalent to eukaryotic membrane rafts. FMMs are highly dynamic and increase in number as cells age. Flotillins are thought to be important factors in membrane fluidity. This Bacillus pumilus (strain SAFR-032) protein is Flotillin-like protein FloA.